Reading from the N-terminus, the 271-residue chain is Membrane protein insertase YidC 1 (271 aa).

A signal peptide spans 1-20; it reads MKKKLKTFSLILLTGSLLVA. The N-palmitoyl cysteine moiety is linked to residue Cys21. Cys21 carries S-diacylglycerol cysteine lipidation. Helical transmembrane passes span 45–65, 124–144, 163–183, and 201–221; these read IQWL…TLII, YASV…FQAL, PDPY…STWL, and VMPF…VLYW.

Belongs to the OXA1/ALB3/YidC family. Type 2 subfamily.

The protein localises to the cell membrane. In terms of biological role, required for the insertion and/or proper folding and/or complex formation of integral membrane proteins into the membrane. Involved in integration of membrane proteins that insert both dependently and independently of the Sec translocase complex, as well as at least some lipoproteins. The chain is Membrane protein insertase YidC 1 from Streptococcus agalactiae serotype III (strain NEM316).